We begin with the raw amino-acid sequence, 160 residues long: UPF0178 protein BB1267 (160 aa).

This sequence belongs to the UPF0178 family.

The sequence is that of UPF0178 protein BB1267 from Bordetella bronchiseptica (strain ATCC BAA-588 / NCTC 13252 / RB50) (Alcaligenes bronchisepticus).